The primary structure comprises 184 residues: GTP cyclohydrolase 1 (184 aa).

3 residues coordinate Zn(2+): C75, H78, and C146.

The protein belongs to the GTP cyclohydrolase I family. As to quaternary structure, toroid-shaped homodecamer, composed of two pentamers of five dimers.

It carries out the reaction GTP + H2O = 7,8-dihydroneopterin 3'-triphosphate + formate + H(+). It functions in the pathway cofactor biosynthesis; 7,8-dihydroneopterin triphosphate biosynthesis; 7,8-dihydroneopterin triphosphate from GTP: step 1/1. The polypeptide is GTP cyclohydrolase 1 (Pseudoalteromonas translucida (strain TAC 125)).